The primary structure comprises 227 residues: MTNNVIIRQLGIQAYQLVLVAMQRFTERRKANTIDEIWLVQHPPVFTQGNASESEYLLLIPGDIPVVQSDRGGKITYHGPGQQVMYVMLDLRRRNLLVRDLITILEKTVITTLYKFAITTAYSKKDAPGVYVGDDKICSIGLRIRKGCSLHGLALNIAMDLSPFLLINPCGEVGLRMTQLSRLSPVVYNTTDVVKVLLEVFLSLLGGTNTGAIKTWHYNDYLNNSES.

A BPL/LPL catalytic domain is found at 31–209; that stretch reads ANTIDEIWLV…VFLSLLGGTN (179 aa). Substrate is bound by residues 71–78, 139–141, and 152–154; these read RGGKITYH, SIG, and GLA. C170 serves as the catalytic Acyl-thioester intermediate.

The protein belongs to the LipB family.

The protein localises to the cytoplasm. It carries out the reaction octanoyl-[ACP] + L-lysyl-[protein] = N(6)-octanoyl-L-lysyl-[protein] + holo-[ACP] + H(+). It participates in protein modification; protein lipoylation via endogenous pathway; protein N(6)-(lipoyl)lysine from octanoyl-[acyl-carrier-protein]: step 1/2. Functionally, catalyzes the transfer of endogenously produced octanoic acid from octanoyl-acyl-carrier-protein onto the lipoyl domains of lipoate-dependent enzymes. Lipoyl-ACP can also act as a substrate although octanoyl-ACP is likely to be the physiological substrate. This is Octanoyltransferase from Baumannia cicadellinicola subsp. Homalodisca coagulata.